The primary structure comprises 548 residues: Folylpolyglutamate synthase (548 aa).

Gly130–Ser133 contacts ATP. The Mg(2+) site is built by Ser157, Glu234, and His262. Residues Arg382 and Asp396 each coordinate ATP.

This sequence belongs to the folylpolyglutamate synthase family. Requires a monovalent cation as cofactor.

Its subcellular location is the mitochondrion inner membrane. The protein resides in the mitochondrion matrix. It is found in the cytoplasm. The enzyme catalyses (6S)-5,6,7,8-tetrahydrofolyl-(gamma-L-Glu)(n) + L-glutamate + ATP = (6S)-5,6,7,8-tetrahydrofolyl-(gamma-L-Glu)(n+1) + ADP + phosphate + H(+). It functions in the pathway cofactor biosynthesis; tetrahydrofolylpolyglutamate biosynthesis. Its function is as follows. Catalyzes conversion of folates to polyglutamate derivatives allowing concentration of folate compounds in the cell and the intracellular retention of these cofactors, which are important substrates for most of the folate-dependent enzymes that are involved in one-carbon transfer reactions involved in purine, pyrimidine and amino acid synthesis. Required for methionine synthesis and maintenance of intact mitochondrial DNA. Involved in telomere maintenance. This Saccharomyces cerevisiae (strain AWRI796) (Baker's yeast) protein is Folylpolyglutamate synthase.